The primary structure comprises 313 residues: Ribosomal RNA small subunit methyltransferase H (313 aa).

S-adenosyl-L-methionine-binding positions include 34 to 36 (GGH), Asp-53, Phe-80, Asp-101, and Gln-108.

This sequence belongs to the methyltransferase superfamily. RsmH family.

The protein resides in the cytoplasm. It catalyses the reaction cytidine(1402) in 16S rRNA + S-adenosyl-L-methionine = N(4)-methylcytidine(1402) in 16S rRNA + S-adenosyl-L-homocysteine + H(+). In terms of biological role, specifically methylates the N4 position of cytidine in position 1402 (C1402) of 16S rRNA. This is Ribosomal RNA small subunit methyltransferase H from Lacticaseibacillus paracasei (strain ATCC 334 / BCRC 17002 / CCUG 31169 / CIP 107868 / KCTC 3260 / NRRL B-441) (Lactobacillus paracasei).